A 330-amino-acid polypeptide reads, in one-letter code: Ketol-acid reductoisomerase (NADP(+)) (330 aa).

The KARI N-terminal Rossmann domain occupies 2 to 182 (VEIYYDDDAS…GGTRAGALRT (181 aa)). Residues 25-28 (YGSQ), Ser-51, and Ser-53 each bind NADP(+). The active site involves His-108. Residue Gly-134 participates in NADP(+) binding. The KARI C-terminal knotted domain maps to 183 to 328 (TFTEETETDL…AKLRPLMSWI (146 aa)). Asp-191, Glu-195, Glu-227, and Glu-231 together coordinate Mg(2+). Ser-252 contacts substrate.

It belongs to the ketol-acid reductoisomerase family. It depends on Mg(2+) as a cofactor.

It carries out the reaction (2R)-2,3-dihydroxy-3-methylbutanoate + NADP(+) = (2S)-2-acetolactate + NADPH + H(+). It catalyses the reaction (2R,3R)-2,3-dihydroxy-3-methylpentanoate + NADP(+) = (S)-2-ethyl-2-hydroxy-3-oxobutanoate + NADPH + H(+). The protein operates within amino-acid biosynthesis; L-isoleucine biosynthesis; L-isoleucine from 2-oxobutanoate: step 2/4. It functions in the pathway amino-acid biosynthesis; L-valine biosynthesis; L-valine from pyruvate: step 2/4. Its function is as follows. Involved in the biosynthesis of branched-chain amino acids (BCAA). Catalyzes an alkyl-migration followed by a ketol-acid reduction of (S)-2-acetolactate (S2AL) to yield (R)-2,3-dihydroxy-isovalerate. In the isomerase reaction, S2AL is rearranged via a Mg-dependent methyl migration to produce 3-hydroxy-3-methyl-2-ketobutyrate (HMKB). In the reductase reaction, this 2-ketoacid undergoes a metal-dependent reduction by NADPH to yield (R)-2,3-dihydroxy-isovalerate. In Frankia alni (strain DSM 45986 / CECT 9034 / ACN14a), this protein is Ketol-acid reductoisomerase (NADP(+)).